The following is a 172-amino-acid chain: Arginine repressor (172 aa).

Belongs to the ArgR family.

The protein localises to the cytoplasm. It participates in amino-acid biosynthesis; L-arginine biosynthesis [regulation]. Its function is as follows. Regulates arginine biosynthesis genes. The polypeptide is Arginine repressor (Bifidobacterium adolescentis (strain ATCC 15703 / DSM 20083 / NCTC 11814 / E194a)).